Consider the following 401-residue polypeptide: Aspartate aminotransferase, mitochondrial (401 aa).

At Thr19 the chain carries Phosphothreonine. Lys30 carries the N6-acetyllysine modification. Substrate is bound at residue Gly36. An N6-acetyllysine; alternate modification is found at Lys44. Lys44 carries the N6-succinyllysine; alternate modification. N6-acetyllysine is present on Lys53. Position 61 is an N6-acetyllysine; alternate (Lys61). Position 61 is an N6-succinyllysine; alternate (Lys61). Tyr67 carries the 3'-nitrotyrosine; alternate modification. Tyr67 is subject to Phosphotyrosine; alternate. N6-acetyllysine; alternate occurs at positions 78, 93, and 130. Residues Lys78, Lys93, and Lys130 each carry the N6-succinyllysine; alternate modification. Residue Trp133 coordinates substrate. Lys156 is modified (N6-acetyllysine; alternate). Position 156 is an N6-succinyllysine; alternate (Lys156). A substrate-binding site is contributed by Asn186. An N6-succinyllysine modification is found at Lys198. Lys205 carries the post-translational modification N6-acetyllysine. N6-acetyllysine; alternate occurs at positions 250 and 267. Lys250 bears the N6-(pyridoxal phosphate)lysine; alternate mark. At Lys267 the chain carries N6-succinyllysine; alternate. Lys273 is subject to N6-acetyllysine. An N6-acetyllysine; alternate modification is found at Lys280. Lys280 is modified (N6-succinyllysine; alternate). Arg284 carries the asymmetric dimethylarginine modification. Position 309 is an N6-acetyllysine; alternate (Lys309). Residue Lys309 is modified to N6-succinyllysine; alternate. At Lys316 the chain carries N6-acetyllysine. The residue at position 334 (Lys334) is an N6-acetyllysine; alternate. Lys334 is subject to N6-succinyllysine; alternate. An N6-acetyllysine mark is found at Lys335 and Lys358. 2 positions are modified to N6-acetyllysine; alternate: Lys367 and Lys375. Residues Lys367 and Lys375 each carry the N6-succinyllysine; alternate modification. Arg378 provides a ligand contact to substrate.

The protein belongs to the class-I pyridoxal-phosphate-dependent aminotransferase family. In terms of assembly, homodimer. It depends on pyridoxal 5'-phosphate as a cofactor.

It is found in the mitochondrion matrix. The protein resides in the cell membrane. It catalyses the reaction L-aspartate + 2-oxoglutarate = oxaloacetate + L-glutamate. The catalysed reaction is L-kynurenine + 2-oxoglutarate = kynurenate + L-glutamate + H2O. Its function is as follows. Catalyzes the irreversible transamination of the L-tryptophan metabolite L-kynurenine to form kynurenic acid (KA). As a member of the malate-aspartate shuttle, it has a key role in the intracellular NAD(H) redox balance. Is important for metabolite exchange between mitochondria and cytosol, and for amino acid metabolism. Facilitates cellular uptake of long-chain free fatty acids. This is Aspartate aminotransferase, mitochondrial (GOT2) from Equus caballus (Horse).